The primary structure comprises 63 residues: MQHEKSLEFLQIAMKYLPEAKEQLEKSGIELSMEAIQPFMNLFTTVMAEAYELGKSDAKSETE.

Functionally, negatively regulates the transcription of the comG operon. This chain is ComG operon repressor (comZ), found in Bacillus subtilis (strain 168).